We begin with the raw amino-acid sequence, 122 residues long: Large ribosomal subunit protein uL14 (122 aa).

It belongs to the universal ribosomal protein uL14 family. Part of the 50S ribosomal subunit. Forms a cluster with proteins L3 and L19. In the 70S ribosome, L14 and L19 interact and together make contacts with the 16S rRNA in bridges B5 and B8.

Binds to 23S rRNA. Forms part of two intersubunit bridges in the 70S ribosome. The protein is Large ribosomal subunit protein uL14 of Corynebacterium diphtheriae (strain ATCC 700971 / NCTC 13129 / Biotype gravis).